Here is a 191-residue protein sequence, read N- to C-terminus: dTTP/UTP pyrophosphatase (191 aa).

Asp-68 acts as the Proton acceptor in catalysis.

The protein belongs to the Maf family. YhdE subfamily. It depends on a divalent metal cation as a cofactor.

It is found in the cytoplasm. It carries out the reaction dTTP + H2O = dTMP + diphosphate + H(+). It catalyses the reaction UTP + H2O = UMP + diphosphate + H(+). Its function is as follows. Nucleoside triphosphate pyrophosphatase that hydrolyzes dTTP and UTP. May have a dual role in cell division arrest and in preventing the incorporation of modified nucleotides into cellular nucleic acids. In Thermoanaerobacter pseudethanolicus (strain ATCC 33223 / 39E) (Clostridium thermohydrosulfuricum), this protein is dTTP/UTP pyrophosphatase.